The chain runs to 1129 residues: Tyrosine-protein kinase JAK2 (1129 aa).

The 344-residue stretch at 35-378 folds into the FERM domain; that stretch reads PLLQVYLYYS…GYYRLTADAH (344 aa). A Phosphotyrosine; by autocatalysis modification is found at Y117. The SH2; atypical domain maps to 399–480; it reads HGPIFMDFAI…NLKDLLTCYQ (82 aa). 2 consecutive Protein kinase domains span residues 542-806 and 846-1118; these read LIFE…NSLF and LKFL…DLAQ. 852-860 provides a ligand contact to ATP; sequence LGKGNFGSV. The residue at position 865 (Y865) is a Phosphotyrosine; by autocatalysis. K879 contributes to the ATP binding site. A phosphotyrosine; by autocatalysis mark is found at Y963 and Y969. The active-site Proton acceptor is the D973. Phosphotyrosine; by autocatalysis occurs at positions 1004 and 1005.

It belongs to the protein kinase superfamily. Tyr protein kinase family. JAK subfamily. Post-translationally, autophosphorylated, leading to regulate its activity.

The protein localises to the endomembrane system. It is found in the nucleus. The catalysed reaction is L-tyrosyl-[protein] + ATP = O-phospho-L-tyrosyl-[protein] + ADP + H(+). Its activity is regulated as follows. Regulated by autophosphorylation, can both activate or decrease activity. Heme regulates its activity by enhancing the phosphorylation on Tyr-1004 and Tyr-1005. Functionally, non-receptor tyrosine kinase involved in various processes such as cell growth, development, differentiation or histone modifications. Mediates essential signaling events in both innate and adaptive immunity. In the cytoplasm, plays a pivotal role in signal transduction via its association with cytokine receptors. Following ligand-binding to cell surface receptors, phosphorylates specific tyrosine residues on the cytoplasmic tails of the receptor, creating docking sites for STATs proteins. Subsequently, phosphorylates the STATs proteins once they are recruited to the receptor. Phosphorylated STATs then form homodimer or heterodimers and translocate to the nucleus to activate gene transcription. For example, cell stimulation with erythropoietin (EPO) during erythropoiesis leads to JAK2 autophosphorylation, activation, and its association with erythropoietin receptor (EPOR) that becomes phosphorylated in its cytoplasmic domain. Then, STAT5 (STAT5A or STAT5B) is recruited, phosphorylated and activated by JAK2. Once activated, dimerized STAT5 translocates into the nucleus and promotes the transcription of several essential genes involved in the modulation of erythropoiesis. Part of a signaling cascade that is activated by increased cellular retinol and that leads to the activation of STAT5 (STAT5A or STAT5B). In the nucleus, plays a key role in chromatin by specifically mediating phosphorylation of 'Tyr-41' of histone H3 (H3Y41ph), a specific tag that promotes exclusion of CBX5 (HP1 alpha) from chromatin. Up-regulates the potassium voltage-gated channel activity of KCNA3. The chain is Tyrosine-protein kinase JAK2 from Gallus gallus (Chicken).